We begin with the raw amino-acid sequence, 727 residues long: Cadmium-transporting ATPase (727 aa).

The 64-residue stretch at 12 to 75 (EMNVYRVQGF…AGAFENLKVS (64 aa)) folds into the HMA domain. Cd(2+) is bound by residues Cys23 and Cys26. A run of 5 helical transmembrane segments spans residues 106–126 (STLL…FVNG), 130–150 (LVTS…LFKV), 171–191 (IGAT…LFAI), 336–356 (IIMV…GGSW), and 364–384 (LAVL…ISIV). The active-site 4-aspartylphosphate intermediate is Asp415. Transmembrane regions (helical) follow at residues 672–694 (LNII…LLVI) and 699–721 (TLWI…SLRL).

The protein belongs to the cation transport ATPase (P-type) (TC 3.A.3) family. Type IB subfamily.

It is found in the cell membrane. It catalyses the reaction Cd(2+)(in) + ATP + H2O = Cd(2+)(out) + ADP + phosphate + H(+). Inhibited by the antibiotic bafilomycin A1. Partially inhibited by DCCD, nigericin and FCCP. Couples the hydrolysis of ATP with the export of cadmium. Involved in cadmium resistance. This chain is Cadmium-transporting ATPase, found in Staphylococcus aureus.